Here is a 547-residue protein sequence, read N- to C-terminus: DNA polymerase kappa (547 aa).

A disordered region spans residues 18–39; sequence LTIEDDGSSSSDEEATLKRRLA. Residues 20–31 are compositionally biased toward acidic residues; sequence IEDDGSSSSDEE. The UmuC domain maps to 132-316; the sequence is IVHVDCDAFY…LPVREVSGIG (185 aa). The Mg(2+) site is built by Asp-136 and Asp-226. The UBZ4-type zinc finger occupies 489-518; that stretch reads TVPCPVCQKNIENELGILNQHVDLCLNVET. Zn(2+)-binding residues include Cys-492, Cys-495, His-509, and Cys-513.

In terms of assembly, interacts with hus1 and rad17.

It is found in the cytoplasm. It localises to the nucleus. The catalysed reaction is DNA(n) + a 2'-deoxyribonucleoside 5'-triphosphate = DNA(n+1) + diphosphate. In terms of biological role, DNA polymerase specifically involved in DNA repair. Plays an important role in translesion synthesis, where the normal high-fidelity DNA polymerases cannot proceed and DNA synthesis stalls. Has a role in meiosis. The polypeptide is DNA polymerase kappa (mug40) (Schizosaccharomyces pombe (strain 972 / ATCC 24843) (Fission yeast)).